The sequence spans 299 residues: Fluorinase (299 aa).

S-adenosyl-L-methionine-binding positions include D16, 21 to 23 (DDS), Y77, S158, D210, N215, 269 to 270 (SR), and 277 to 279 (RNA).

In terms of assembly, homohexamer; dimers of trimer.

The enzyme catalyses fluoride + S-adenosyl-L-methionine = 5'-deoxy-5'-fluoroadenosine + L-methionine. Its activity is regulated as follows. Competitively inhibited by S-adenosyl-L-homocysteine (AdoHcy) and S-adenosyl-L-homocysteine (SAH). Sinefungin is only weakly inhibitory. In terms of biological role, involved in the biosynthesis of fluorometabolites. Catalyzes the formation of a C-F bond by combining S-adenosyl-L-methionine (SAM) and fluoride to generate 5'-fluoro-5'-deoxyadenosine (5'-FDA) and L-methionine. It can also use 2'-deoxyadenosine in place of adenosine as substrate. The chain is Fluorinase from Streptantibioticus cattleyicolor (Streptomyces cattleya).